A 523-amino-acid chain; its full sequence is Leucine-rich repeat-containing protein 27 (523 aa).

The disordered stretch occupies residues 1 to 26 (MEDTSPQAVAEKAAKDPKAAKDLKDD). Residues 12 to 26 (KAAKDPKAAKDLKDD) show a composition bias toward basic and acidic residues. LRR repeat units lie at residues 55–76 (SSPV…FKIP), 77–98 (NLQQ…FFQL), 101–122 (NLTW…IGSH), 124–145 (HLKT…LGQV), and 147–168 (TLTA…IVQK). Disordered regions lie at residues 206–236 (QYPV…ADFF) and 372–394 (REQT…HSNM). Composition is skewed to basic and acidic residues over residues 227-236 (DQEKEKADFF) and 372-385 (REQT…RELS). Coiled coils occupy residues 335 to 374 (VHAN…WREQ) and 463 to 494 (MQDI…TLNK). The tract at residues 503–523 (GNLSLHPPASQPQNIFFNTKS) is disordered. The segment covering 513-523 (QPQNIFFNTKS) has biased composition (polar residues).

This is Leucine-rich repeat-containing protein 27 (Lrrc27) from Mus musculus (Mouse).